The primary structure comprises 203 residues: Adenylyl-sulfate kinase (203 aa).

35 to 42 (GLSGSGKS) serves as a coordination point for ATP. The active-site Phosphoserine intermediate is the serine 109.

The protein belongs to the APS kinase family.

It carries out the reaction adenosine 5'-phosphosulfate + ATP = 3'-phosphoadenylyl sulfate + ADP + H(+). It participates in sulfur metabolism; hydrogen sulfide biosynthesis; sulfite from sulfate: step 2/3. In terms of biological role, catalyzes the synthesis of activated sulfate. The chain is Adenylyl-sulfate kinase from Geotalea daltonii (strain DSM 22248 / JCM 15807 / FRC-32) (Geobacter daltonii).